Consider the following 318-residue polypeptide: 2-keto-3-deoxygluconate permease (318 aa).

Helical transmembrane passes span 10–30, 42–62, 76–96, 105–125, 139–159, 162–182, 199–219, 224–244, 254–274, and 289–309; these read IPGG…TFTP, GLIT…GASI, VLVV…GAFL, LLAG…NGGL, AGAF…VILG, GIAT…LIGF, VQTL…LSVI, FAGI…LILA, TAGI…LLIA, and ALVA…TALW.

Belongs to the KdgT transporter family.

Its subcellular location is the cell inner membrane. It carries out the reaction 2-dehydro-3-deoxy-D-gluconate(in) + H(+)(in) = 2-dehydro-3-deoxy-D-gluconate(out) + H(+)(out). Catalyzes the proton-dependent uptake of 2-keto-3-deoxygluconate (KDG) into the cell. This Pectobacterium atrosepticum (strain SCRI 1043 / ATCC BAA-672) (Erwinia carotovora subsp. atroseptica) protein is 2-keto-3-deoxygluconate permease.